Here is a 199-residue protein sequence, read N- to C-terminus: FMN-dependent NADH:quinone oxidoreductase 1 (199 aa).

Residues S10, 17 to 19 (SNS), and 87 to 90 (MYNF) each bind FMN.

It belongs to the azoreductase type 1 family. In terms of assembly, homodimer. Requires FMN as cofactor.

The catalysed reaction is 2 a quinone + NADH + H(+) = 2 a 1,4-benzosemiquinone + NAD(+). It carries out the reaction N,N-dimethyl-1,4-phenylenediamine + anthranilate + 2 NAD(+) = 2-(4-dimethylaminophenyl)diazenylbenzoate + 2 NADH + 2 H(+). Quinone reductase that provides resistance to thiol-specific stress caused by electrophilic quinones. Its function is as follows. Also exhibits azoreductase activity. Catalyzes the reductive cleavage of the azo bond in aromatic azo compounds to the corresponding amines. The polypeptide is FMN-dependent NADH:quinone oxidoreductase 1 (Mesoplasma florum (strain ATCC 33453 / NBRC 100688 / NCTC 11704 / L1) (Acholeplasma florum)).